The chain runs to 119 residues: Large ribosomal subunit protein uL18 (119 aa).

This sequence belongs to the universal ribosomal protein uL18 family. In terms of assembly, part of the 50S ribosomal subunit; part of the 5S rRNA/L5/L18/L25 subcomplex. Contacts the 5S and 23S rRNAs.

Functionally, this is one of the proteins that bind and probably mediate the attachment of the 5S RNA into the large ribosomal subunit, where it forms part of the central protuberance. This is Large ribosomal subunit protein uL18 from Borrelia recurrentis (strain A1).